Consider the following 199-residue polypeptide: FMN-dependent NADH:quinone oxidoreductase 1 (199 aa).

FMN contacts are provided by residues serine 10, 17-19, and 87-90; these read SNS and MYNF.

This sequence belongs to the azoreductase type 1 family. In terms of assembly, homodimer. FMN serves as cofactor.

It catalyses the reaction 2 a quinone + NADH + H(+) = 2 a 1,4-benzosemiquinone + NAD(+). The catalysed reaction is N,N-dimethyl-1,4-phenylenediamine + anthranilate + 2 NAD(+) = 2-(4-dimethylaminophenyl)diazenylbenzoate + 2 NADH + 2 H(+). Functionally, quinone reductase that provides resistance to thiol-specific stress caused by electrophilic quinones. In terms of biological role, also exhibits azoreductase activity. Catalyzes the reductive cleavage of the azo bond in aromatic azo compounds to the corresponding amines. This Mesoplasma florum (strain ATCC 33453 / NBRC 100688 / NCTC 11704 / L1) (Acholeplasma florum) protein is FMN-dependent NADH:quinone oxidoreductase 1.